The primary structure comprises 396 residues: KiSS-1 receptor (396 aa).

Residues 1–46 (MAAEATLGPNVSWWAPSNASGCPGCGVNASDGPGSAPRPLDAWLVP) are Extracellular-facing. Residues Asn-10, Asn-18, and Asn-28 are each glycosylated (N-linked (GlcNAc...) asparagine). The helical transmembrane segment at 47–67 (LFFAALMLLGLVGNSLVIFVI) threads the bilayer. The Cytoplasmic segment spans residues 68-90 (CRHKHMQTVTNFYIANLAATDVT). A helical membrane pass occupies residues 91 to 111 (FLLCCVPFTALLYPLPTWVLG). At 112–120 (DFMCKFVNY) the chain is on the extracellular side. Cys-115 and Cys-191 are joined by a disulfide. The helical transmembrane segment at 121 to 138 (IQQVSVQATCATLTAMSV) threads the bilayer. Topologically, residues 139-159 (DRWYVTVFPLRALHRRTPRLA) are cytoplasmic. Residues 160–180 (LTVSLSIWVGSAAVSAPVLAL) traverse the membrane as a helical segment. At 181–202 (HRLSPGPHTYCSEAFPSRALER) the chain is on the extracellular side. The helical transmembrane segment at 203 to 223 (AFALYNLLALYLLPLLATCAC) threads the bilayer. The Cytoplasmic segment spans residues 224 to 264 (YGAMLRHLGRAAVRPAPTDGALQGQLLAQRAGAVRTKVSRL). Residues 265-285 (VAAVVLLFAACWGPIQLFLVL) traverse the membrane as a helical segment. The Extracellular portion of the chain corresponds to 286 to 305 (QALGPSGAWHPRSYAAYALK). Residues 306-326 (IWAHCMSYSNSALNPLLYAFL) form a helical membrane-spanning segment. The Cytoplasmic portion of the chain corresponds to 327–396 (GSHFRQAFCR…SVQDEHTAPL (70 aa)). The segment at 346 to 396 (RRPHASAHSDRAAPHSVPHSRAAHPVRVRTPEPGNPVRRSPSVQDEHTAPL) is disordered.

Belongs to the G-protein coupled receptor 1 family. As to expression, highest expression levels in the cerebrum and cecum. Moderate expression in the ovary, colon and placenta. Low levels in the uterus, small intestine, and thymus. Expressed only moderately in the placenta. No expression in kidney tissues. Has a complex and abundant central nervous system expression pattern. Expressed in brain regions such as pons, midbrain, thalamus, hypothalamus, hippocampus, amygdala, cortex, frontal cortex, and striatum. No expression in the cerebellum. Persistent expression is detected in hypothalamus throughout postnatal development, with maximum expression levels at puberty in both male and female. Hypothalamic expression changed throughout the estrus cycle and is significantly increased after gonadectomy, a rise that is prevented by sex steroid replacement both in males and females.

It localises to the cell membrane. Functionally, receptor for metastin, a C-terminally amidated peptide of KiSS1. KiSS1 is a metastasis suppressor protein. Activation of the receptor inhibits cell proliferation and cell migration, key characteristics of tumor metastasis. The receptor is essential for normal gonadotropin-released hormone physiology and for puberty. The hypothalamic KiSS1/KISS1R system is a pivotal factor in central regulation of the gonadotropic axis at puberty and in adulthood. Analysis of the transduction pathways activated by the receptor identifies coupling to phospholipase C and intracellular calcium release through pertussis toxin-insensitive G(q) proteins. The sequence is that of KiSS-1 receptor (Kiss1r) from Rattus norvegicus (Rat).